We begin with the raw amino-acid sequence, 101 residues long: MVCEKCERKLGTVITPDTWKDGARNTTESGGRKLNENKALTSKKARFDPYGKNKFAICRICKSSVHQPGSHYCQGCAYKKGICSMCGKKVLDTKNYKQTSV.

This sequence belongs to the CRIPT family. Component of the minor spliceosome, which splices U12-type introns.

The protein resides in the cytoplasm. Its function is as follows. As a component of the minor spliceosome, involved in the splicing of U12-type introns in pre-mRNAs. This chain is Cysteine-rich PDZ-binding protein (CRIPT), found in Gallus gallus (Chicken).